We begin with the raw amino-acid sequence, 481 residues long: 3-isopropylmalate dehydratase large subunit (481 aa).

Cys355, Cys415, and Cys418 together coordinate [4Fe-4S] cluster.

Belongs to the aconitase/IPM isomerase family. LeuC type 1 subfamily. As to quaternary structure, heterodimer of LeuC and LeuD. Requires [4Fe-4S] cluster as cofactor.

The enzyme catalyses (2R,3S)-3-isopropylmalate = (2S)-2-isopropylmalate. It functions in the pathway amino-acid biosynthesis; L-leucine biosynthesis; L-leucine from 3-methyl-2-oxobutanoate: step 2/4. Functionally, catalyzes the isomerization between 2-isopropylmalate and 3-isopropylmalate, via the formation of 2-isopropylmaleate. This chain is 3-isopropylmalate dehydratase large subunit, found in Symbiobacterium thermophilum (strain DSM 24528 / JCM 14929 / IAM 14863 / T).